A 539-amino-acid chain; its full sequence is Inositol 1,4,5-trisphosphate receptor-interacting protein (539 aa).

Residues 1 to 24 (MQGAIARVCMVVVAAILNHPLLFP) form the signal peptide. Over 25–71 (NENTTVPEQDEDLLARMKEHQEKLEAEQKRLEQEISQNETSVIGDQD) the chain is Extracellular. Residues Asn-27 and Asn-62 are each glycosylated (N-linked (GlcNAc...) asparagine). Residues 32 to 68 (EQDEDLLARMKEHQEKLEAEQKRLEQEISQNETSVIG) adopt a coiled-coil conformation. Residues 72–92 (GYGWYFWSALCLVIFFTIEVC) form a helical membrane-spanning segment. Topologically, residues 93–539 (RQDLISAEIP…RHEFSSAEQI (447 aa)) are cytoplasmic.

The protein belongs to the ITPRIP family.

It localises to the cell membrane. It is found in the nucleus outer membrane. Its function is as follows. Enhances Ca(2+)-mediated inhibition of inositol 1,4,5-triphosphate receptor (ITPR) Ca(2+) release. The chain is Inositol 1,4,5-trisphosphate receptor-interacting protein (itprip) from Danio rerio (Zebrafish).